The sequence spans 78 residues: Omega-conotoxin-like 12 (78 aa).

The signal sequence occupies residues M1 to A22. Positions D23–K42 are excised as a propeptide. 3 disulfides stabilise this stretch: C46–C62, C53–C65, and C61–C72.

The protein belongs to the conotoxin O1 superfamily. As to expression, expressed by the venom duct.

It is found in the secreted. Omega-conotoxins act at presynaptic membranes, they bind and block voltage-gated calcium channels (Cav). The sequence is that of Omega-conotoxin-like 12 from Conus striatus (Striated cone).